Here is a 123-residue protein sequence, read N- to C-terminus: UPF0102 protein PSHAa2523 (123 aa).

The protein belongs to the UPF0102 family.

The protein is UPF0102 protein PSHAa2523 of Pseudoalteromonas translucida (strain TAC 125).